Reading from the N-terminus, the 364-residue chain is Fructose-bisphosphate aldolase A (364 aa).

Tyr-5 carries the post-translational modification Phosphotyrosine. At Thr-9 the chain carries Phosphothreonine. A phosphoserine mark is found at Ser-36 and Ser-39. Lys-42 carries the post-translational modification N6-acetyllysine; alternate. Residue Lys-42 forms a Glycyl lysine isopeptide (Lys-Gly) (interchain with G-Cter in SUMO1); alternate linkage. A Glycyl lysine isopeptide (Lys-Gly) (interchain with G-Cter in SUMO2); alternate cross-link involves residue Lys-42. Arg-43 provides a ligand contact to beta-D-fructose 1,6-bisphosphate. Ser-46 carries the post-translational modification Phosphoserine. Position 99 is an N6-(2-hydroxyisobutyryl)lysine (Lys-99). At Lys-108 the chain carries N6-acetyllysine. At Lys-111 the chain carries N6-acetyllysine; alternate. Lys-111 carries the post-translational modification N6-malonyllysine; alternate. Ser-132 is subject to Phosphoserine. N6-(2-hydroxyisobutyryl)lysine is present on Lys-147. Glu-188 serves as the catalytic Proton acceptor. Lys-230 acts as the Schiff-base intermediate with dihydroxyacetone-P in catalysis. The residue at position 272 (Ser-272) is a Phosphoserine. Beta-D-fructose 1,6-bisphosphate-binding positions include 272–274 (SGG), Ser-301, and Arg-304. Lys-312 bears the N6-malonyllysine mark. At Lys-330 the chain carries N6-acetyllysine.

Belongs to the class I fructose-bisphosphate aldolase family. As to quaternary structure, homotetramer. Interacts with SNX9 and WAS. Interacts with FBP2; the interaction blocks FBP2 inhibition by physiological concentrations of AMP and reduces inhibition by Ca(2+).

It is found in the cytoplasm. The protein localises to the myofibril. It localises to the sarcomere. The protein resides in the i band. Its subcellular location is the m line. It carries out the reaction beta-D-fructose 1,6-bisphosphate = D-glyceraldehyde 3-phosphate + dihydroxyacetone phosphate. Its pathway is carbohydrate degradation; glycolysis; D-glyceraldehyde 3-phosphate and glycerone phosphate from D-glucose: step 4/4. Catalyzes the reversible conversion of beta-D-fructose 1,6-bisphosphate (FBP) into two triose phosphate and plays a key role in glycolysis and gluconeogenesis. In addition, may also function as scaffolding protein. This is Fructose-bisphosphate aldolase A (ALDOA) from Pan troglodytes (Chimpanzee).